The primary structure comprises 280 residues: UPF0328 protein ECU06_0020/ECU06_1700 (280 aa).

Belongs to the UPF0328 family.

The polypeptide is UPF0328 protein ECU06_0020/ECU06_1700 (Encephalitozoon cuniculi (strain GB-M1) (Microsporidian parasite)).